The primary structure comprises 84 residues: MGKIILFEDVEFGGKKLELETSVSDLNVHGFNDIVSSIIVESGTWFVFDDEGFSGPSYKLTPGKYPNPGSWGGNDDELSSVKQQ.

Beta/gamma crystallin 'Greek key' domains are found at residues 2 to 42 and 43 to 84; these read GKII…IVES and GTWF…VKQQ. Residues 64–84 are disordered; the sequence is KYPNPGSWGGNDDELSSVKQQ.

The protein belongs to the beta/gamma-crystallin family. Monomer. As to expression, palps of larvae and otolith of the light-sensing ocellus.

Its function is as follows. Structural component of the neuroectodermal visual system. In Ciona intestinalis (Transparent sea squirt), this protein is Beta/gamma-crystallin.